The following is a 529-amino-acid chain: Cytochrome P450 monooxygenase okaD (529 aa).

The chain crosses the membrane as a helical span at residues 13-35 (LPAQHLLASLALVGALLSVGYLL). Cysteine 435 is a binding site for heme.

Belongs to the cytochrome P450 family. Heme is required as a cofactor.

The protein resides in the membrane. It catalyses the reaction okaramine C + 2 reduced [NADPH--hemoprotein reductase] + 2 O2 = okaramine A + 2 oxidized [NADPH--hemoprotein reductase] + 4 H2O + 2 H(+). Its pathway is alkaloid biosynthesis. Its function is as follows. Cytochrome P450 monooxygenase; part of the gene cluster that mediates the biosynthesis of okaramine B, a prenylated indole alkaloid that possesses an unusual octacyclic ring system, including a four-membered azetidine ring and an eight-membered azocine ring, and that exhibits insecticidal activity against silkworm larvae. Within the pathway, okaD likely catalyzes a key step in forming the eight-membered ring of okaramine A using as substrate okaramine C. The biosynthesis begins with the NRPS okaA that condenses two tryptophan molecules into cyclo(L-Trp-L-Trp). Prenylation by the prenyltransferase okaC then leads to the formation of cyclo(N8-(alpha,alpha-dimethylallyl)-L-Trp-6a-(alpha,alpha-dime-thylallyl)-L-Trp). This is followed by indole 2,3-epoxidation by the FAD-dependent monooxygenase okaB to facilitate the formation of the hexahydropyrrolo[2,3-b]indole (HPI) moiety of okaramine C. The cytochrome P450 monooxygenase okaD then likely catalyzes formation of the eight-membered ring of okaramine A. The dioxygenase okaE further forms the unusual 2-dimethyl-3-methyl-azetidine ring to yield 12-deshydroxyl okaramine E, as well as the hydroxylation of 12-deshydroxyl okaramine E to produce okaramine E. The cytochrome P450 monoxygenase okaG converts 12-deshydroxyl okaramine E into 3-desmethyl okaramine B which is further methylated by the methyltransferase okaF into okaramine B. In a shunt pathway, okaG and okaF together are also able to convert okaramine E into okaramine D. Okaramine H is produced by nonenzymatic conversion from okaramine A. The protein is Cytochrome P450 monooxygenase okaD of Penicillium ochrochloron.